Here is a 145-residue protein sequence, read N- to C-terminus: MLHTIKPVANARKTTKRLGRGPGSGTGKTSGKGHKGQLARSGKTLRPGFEGGQIPFFQRIPKRGFHNFAQKKYAVLNLTTLQNFPEDSVITPQLLLEKKIIKDPLSGIKVLGQGTLTKKLVVKASKFSRQAEASILAVGGKIEVI.

Residues M1–E50 are disordered. Positions R20–S30 are enriched in gly residues.

This sequence belongs to the universal ribosomal protein uL15 family. Part of the 50S ribosomal subunit.

In terms of biological role, binds to the 23S rRNA. In Phytoplasma australiense, this protein is Large ribosomal subunit protein uL15.